The primary structure comprises 947 residues: Bifunctional glutamine synthetase adenylyltransferase/adenylyl-removing enzyme (947 aa).

The interval 1-440 is adenylyl removase; the sequence is MTPLSSPLSQ…VFNELIGDDE (440 aa). The segment at 450 to 947 is adenylyl transferase; the sequence is SEPWREVWQD…ASWRKWLVAV (498 aa).

It belongs to the GlnE family. Mg(2+) serves as cofactor.

The catalysed reaction is [glutamine synthetase]-O(4)-(5'-adenylyl)-L-tyrosine + phosphate = [glutamine synthetase]-L-tyrosine + ADP. It carries out the reaction [glutamine synthetase]-L-tyrosine + ATP = [glutamine synthetase]-O(4)-(5'-adenylyl)-L-tyrosine + diphosphate. In terms of biological role, involved in the regulation of glutamine synthetase GlnA, a key enzyme in the process to assimilate ammonia. When cellular nitrogen levels are high, the C-terminal adenylyl transferase (AT) inactivates GlnA by covalent transfer of an adenylyl group from ATP to specific tyrosine residue of GlnA, thus reducing its activity. Conversely, when nitrogen levels are low, the N-terminal adenylyl removase (AR) activates GlnA by removing the adenylyl group by phosphorolysis, increasing its activity. The regulatory region of GlnE binds the signal transduction protein PII (GlnB) which indicates the nitrogen status of the cell. This chain is Bifunctional glutamine synthetase adenylyltransferase/adenylyl-removing enzyme, found in Salmonella heidelberg (strain SL476).